The chain runs to 1492 residues: Cystic fibrosis transmembrane conductance regulator (1492 aa).

Topologically, residues 1–78 are cytoplasmic; the sequence is MQRSPIEKAN…KLVNALRRCF (78 aa). A helical transmembrane segment spans residues 79 to 99; that stretch reads FWRFLFYGILLYFVEFTKAVQ. An ABC transmembrane type-1 1 domain is found at 82-366; that stretch reads FLFYGILLYF…SAIQTWYDSL (285 aa). The Extracellular portion of the chain corresponds to 100-123; the sequence is PLCLGRIIASYNAKNTYEREIAYY. The chain crosses the membrane as a helical span at residues 124–147; it reads LALGLCLLFVVRTLFLHPAVFGLQ. The Cytoplasmic portion of the chain corresponds to 148 to 196; sequence HLGMQMRIALFSLIYKKILKMSSRVLDKIDTGQLVSLLSNNLNKFDEGV. Residues 197-217 traverse the membrane as a helical segment; that stretch reads AVAHFVWIAPVQVVLLMGLIW. Residues 218–223 lie on the Extracellular side of the membrane; the sequence is NELTEF. The helical transmembrane segment at 224 to 244 threads the bilayer; the sequence is VFCGLGFLIMLALFQAWLGKK. Over 245-299 the chain is Cytoplasmic; that stretch reads MMQYRDKRAGKINERLAITSEIIDNIQSVKVYCWEDAMEKIIDDIRQVELKLTRK. Residues 300–320 form a helical membrane-spanning segment; it reads VAYCRYFSSSAFFFSGFFVVF. Residues 321–340 lie on the Extracellular side of the membrane; the sequence is LSVVPYAFIHTIKLRRIFTT. Residues 341–359 traverse the membrane as a helical segment; it reads ISYNIVLRMTVTRQFPSAI. Topologically, residues 360 to 867 are cytoplasmic; that stretch reads QTWYDSLGAI…YLRYVTTNRN (508 aa). Residues W402, S435, 459–466, and Q494 contribute to the ATP site; that span reads GSTGSGKS. The ABC transporter 1 domain occupies 424 to 647; sequence NGDDGLFFSN…KPDFSSQLLG (224 aa). The segment at 655–840 is disordered R region; sequence SAERRNSILT…EEINEEDLKE (186 aa). The helical transmembrane segment at 868–888 threads the bilayer; it reads LVFVLILCLVIFLAEVAASLA. Residues 868–1169 form the ABC transmembrane type-1 2 domain; sequence LVFVLILCLV…AVNSSIDVDG (302 aa). Residues 889–932 lie on the Extracellular side of the membrane; sequence GLWIISGLAINTGSQTNDTSTDLSHLSVFSKFITNGSHYYIFYI. N905 and N923 each carry an N-linked (GlcNAc...) asparagine glycan. Residues 933–953 traverse the membrane as a discontinuously helical segment; sequence YVGLADSFLALGVIRGLPLVH. At 954 to 1004 the chain is on the cytoplasmic side; that stretch reads TLVTVSKDLHKQMLHSVLQGPMTAFNKMKAGRILNRFIKDTAIIDDMLPLT. Residues 1005-1025 traverse the membrane as a helical segment; sequence VFDFVQLILIVVGAICVVSVL. Topologically, residues 1026-1027 are extracellular; it reads QP. Residues 1028 to 1048 form a helical membrane-spanning segment; the sequence is YTLLAAIPVAVIFIMLRAYFL. The Cytoplasmic segment spans residues 1049-1109; the sequence is RTSQQLKQLE…TANWFLYLST (61 aa). Residues 1110 to 1130 form a helical membrane-spanning segment; it reads LRWFQMRIDIVFVLFFIAVTF. Topologically, residues 1131–1144 are extracellular; the sequence is IAIATHDVGEGQVG. A helical transmembrane segment spans residues 1145 to 1165; that stretch reads IILTLAMNITSTLQWAVNSSI. At 1166-1492 the chain is on the cytoplasmic side; the sequence is DVDGLMRSVS…AEEDLQETRL (327 aa). One can recognise an ABC transporter 2 domain in the interval 1220–1453; sequence MMVNNLTAKY…ASLFKQVFGH (234 aa). Residues Y1229 and 1254–1261 each bind ATP; that span reads GRTGAGKS. Positions 1465–1474 are enriched in basic residues; it reads RNSSKRKTRP. Residues 1465–1492 form a disordered region; the sequence is RNSSKRKTRPKISALQEEAEEDLQETRL. Over residues 1481–1492 the composition is skewed to acidic residues; it reads EEAEEDLQETRL. A PDZ-binding motif is present at residues 1483–1485; that stretch reads AEE.

Belongs to the ABC transporter superfamily. ABCC family. CFTR transporter (TC 3.A.1.202) subfamily. In terms of assembly, monomer; does not require oligomerization for channel activity. May form oligomers in the membrane. In terms of processing, phosphorylated; cAMP treatment promotes phosphorylation and activates the channel. Dephosphorylation decreases the ATPase activity (in vitro). Phosphorylation at PKA sites activates the channel. Phosphorylation at PKC sites enhances the response to phosphorylation by PKA. In terms of tissue distribution, expressed in the rectal gland (at protein level).

Its subcellular location is the apical cell membrane. It is found in the early endosome membrane. The protein localises to the cell membrane. It localises to the recycling endosome membrane. The protein resides in the endoplasmic reticulum membrane. It catalyses the reaction ATP + H2O + closed Cl(-) channel = ADP + phosphate + open Cl(-) channel.. The catalysed reaction is chloride(in) = chloride(out). The enzyme catalyses hydrogencarbonate(in) = hydrogencarbonate(out). It carries out the reaction ATP + H2O = ADP + phosphate + H(+). In terms of biological role, epithelial ion channel that plays an important role in the regulation of epithelial ion and water transport and fluid homeostasis. Mediates the transport of chloride ions across the cell membrane. Possesses an intrinsic ATPase activity and utilizes ATP to gate its channel; the passive flow of anions through the channel is gated by cycles of ATP binding and hydrolysis by the ATP-binding domains. The ion channel is also permeable to HCO(3)(-); selectivity depends on the extracellular chloride concentration. Exerts its function also by modulating the activity of other ion channels and transporters. Contributes to the regulation of the pH and the ion content of the epithelial fluid layer. In Squalus acanthias (Spiny dogfish), this protein is Cystic fibrosis transmembrane conductance regulator.